The primary structure comprises 261 residues: Polycomb group RING finger protein 1 (261 aa).

Residues 45–84 form an RING-type zinc finger; it reads CYLCAGYFIDATTITECLHTFCKSCIVKYLQTSKYCPMCN.

Component of a PRC1-like complex.

It is found in the nucleus. Component of a Polycomb group (PcG) multiprotein PRC1-like complex, a complex class required to maintain the transcriptionally repressive state of many genes, including Hox genes, throughout development. PcG PRC1 complex acts via chromatin remodeling and modification of histones; it mediates monoubiquitination of histone H2A 'Lys-119', rendering chromatin heritably changed in its expressibility. The protein is Polycomb group RING finger protein 1 (pcgf1) of Danio rerio (Zebrafish).